We begin with the raw amino-acid sequence, 58 residues long: MAVPARRTSKTRKRLRRTHYKLQVPGMSACPNCGELRKAHHVCPSCGYYGDKEVVKTK.

This sequence belongs to the bacterial ribosomal protein bL32 family.

This is Large ribosomal subunit protein bL32 from Ligilactobacillus salivarius (strain UCC118) (Lactobacillus salivarius).